Reading from the N-terminus, the 162-residue chain is Large ribosomal subunit protein uL10 (162 aa).

It belongs to the universal ribosomal protein uL10 family. In terms of assembly, part of the ribosomal stalk of the 50S ribosomal subunit. The N-terminus interacts with L11 and the large rRNA to form the base of the stalk. The C-terminus forms an elongated spine to which L12 dimers bind in a sequential fashion forming a multimeric L10(L12)X complex.

Functionally, forms part of the ribosomal stalk, playing a central role in the interaction of the ribosome with GTP-bound translation factors. The polypeptide is Large ribosomal subunit protein uL10 (Vibrio vulnificus (strain CMCP6)).